The following is a 628-amino-acid chain: Alpha pinene synthase, chloroplastic (628 aa).

A chloroplast-targeting transit peptide spans methionine 1–arginine 46. Positions 381, 385, and 532 each coordinate Mg(2+). The DDXXD motif signature appears at aspartate 381–aspartate 385.

This sequence belongs to the terpene synthase family. Tpsa subfamily. Mg(2+) is required as a cofactor. The cofactor is Mn(2+).

The protein localises to the plastid. The protein resides in the chloroplast. The catalysed reaction is (2E)-geranyl diphosphate = alpha-pinene + diphosphate. The protein operates within secondary metabolite biosynthesis; terpenoid biosynthesis. Monoterpene synthase involved in the biosynthesis of volatile compounds. Mediates the conversion of (2E)-geranyl diphosphate (GPP) into alpha-pinene. The sequence is that of Alpha pinene synthase, chloroplastic from Chamaecyparis formosensis (Formosan cypress).